The following is a 61-amino-acid chain: Small ribosomal subunit protein uS14 (61 aa).

Positions 24, 27, 40, and 43 each coordinate Zn(2+).

This sequence belongs to the universal ribosomal protein uS14 family. Zinc-binding uS14 subfamily. As to quaternary structure, part of the 30S ribosomal subunit. Contacts proteins S3 and S10. Zn(2+) is required as a cofactor.

Its function is as follows. Binds 16S rRNA, required for the assembly of 30S particles and may also be responsible for determining the conformation of the 16S rRNA at the A site. The polypeptide is Small ribosomal subunit protein uS14 (Streptococcus mutans serotype c (strain ATCC 700610 / UA159)).